A 508-amino-acid polypeptide reads, in one-letter code: Maturase K (508 aa).

It belongs to the intron maturase 2 family. MatK subfamily.

The protein resides in the plastid. It localises to the chloroplast. Functionally, usually encoded in the trnK tRNA gene intron. Probably assists in splicing its own and other chloroplast group II introns. This is Maturase K from Wolffia arrhiza (Rootless water-meal).